The primary structure comprises 146 residues: UPF0306 protein HD_1359 (146 aa).

It belongs to the UPF0306 family.

The protein is UPF0306 protein HD_1359 of Haemophilus ducreyi (strain 35000HP / ATCC 700724).